Consider the following 396-residue polypeptide: Tyrosine--tRNA ligase (396 aa).

Position 36 (tyrosine 36) interacts with L-tyrosine. The 'HIGH' region signature appears at 41 to 50 (PTANSLHIGN). Positions 165 and 169 each coordinate L-tyrosine. A 'KMSKS' region motif is present at residues 225-229 (KMGKT). Lysine 228 contacts ATP. The S4 RNA-binding domain maps to 331–394 (TNLIDYLVET…KKSFLTIKTV (64 aa)).

This sequence belongs to the class-I aminoacyl-tRNA synthetase family. TyrS type 1 subfamily. In terms of assembly, homodimer.

It localises to the cytoplasm. It carries out the reaction tRNA(Tyr) + L-tyrosine + ATP = L-tyrosyl-tRNA(Tyr) + AMP + diphosphate + H(+). Its function is as follows. Catalyzes the attachment of tyrosine to tRNA(Tyr) in a two-step reaction: tyrosine is first activated by ATP to form Tyr-AMP and then transferred to the acceptor end of tRNA(Tyr). This chain is Tyrosine--tRNA ligase, found in Mycoplasma genitalium (strain ATCC 33530 / DSM 19775 / NCTC 10195 / G37) (Mycoplasmoides genitalium).